The chain runs to 72 residues: Brevinin-2SN4 (72 aa).

Positions 1-22 (MFTMKKPMLLLFFLGMISMSLC) are cleaved as a signal peptide. The propeptide at 23–40 (QDERGADEDDGGEMTEEE) is removed in mature form. Cysteine 66 and cysteine 72 are joined by a disulfide.

This sequence belongs to the frog skin active peptide (FSAP) family. Brevinin subfamily. As to expression, expressed by the skin glands.

It is found in the secreted. Its function is as follows. Antimicrobial peptide. Active against a variety of Gram-negative and Gram-positive bacterial strains. Not active against fungi. Shows very weak hemolytic activity against human erythrocytes. This Sylvirana spinulosa (Fine-spined frog) protein is Brevinin-2SN4.